Here is a 440-residue protein sequence, read N- to C-terminus: Transposon Ty1-A Gag polyprotein (440 aa).

Polar residues-rich tracts occupy residues 1–23, 48–60, 71–93, and 127–152; these read MESQ…SVTS, TKAN…TPAS, SPQT…MMTQ, and QSQF…GNTF. Disordered regions lie at residues 1-93, 126-173, and 352-440; these read MESQ…MMTQ, PQSQ…RPPP, and GSRN…PETY. Positions 153-165 are enriched in low complexity; the sequence is TDSSSADSDMTST. An RNA-binding region spans residues 299 to 401; sequence NNGIHINNKV…NSKSKTARAH (103 aa). Positions 402 to 418 are enriched in low complexity; the sequence is NVSTSNNSPSTDNDSIS. At S416 the chain carries Phosphoserine. The span at 419–428 shows a compositional bias: polar residues; that stretch reads KSTTEPIQLN. A compositionally biased stretch (basic and acidic residues) spans 429–440; the sequence is NKHDLHLRPETY.

In terms of assembly, homotrimer.

The protein resides in the cytoplasm. Its function is as follows. Capsid protein (CA) is the structural component of the virus-like particle (VLP), forming the shell that encapsulates the retrotransposons dimeric RNA genome. The particles are assembled from trimer-clustered units and there are holes in the capsid shells that allow for the diffusion of macromolecules. CA also has nucleocapsid-like chaperone activity, promoting primer tRNA(i)-Met annealing to the multipartite primer-binding site (PBS), dimerization of Ty1 RNA and initiation of reverse transcription. The chain is Transposon Ty1-A Gag polyprotein (TY1A-A) from Saccharomyces cerevisiae (strain ATCC 204508 / S288c) (Baker's yeast).